A 170-amino-acid chain; its full sequence is Large ribosomal subunit protein uL22c (170 aa).

The protein belongs to the universal ribosomal protein uL22 family. In terms of assembly, part of the 50S ribosomal subunit.

It localises to the plastid. The protein localises to the chloroplast. Functionally, this protein binds specifically to 23S rRNA. Its function is as follows. The globular domain of the protein is located near the polypeptide exit tunnel on the outside of the subunit, while an extended beta-hairpin is found that lines the wall of the exit tunnel in the center of the 70S ribosome. The protein is Large ribosomal subunit protein uL22c (rpl22) of Nandina domestica (Heavenly bamboo).